Consider the following 452-residue polypeptide: Cobyrinate a,c-diamide synthase (452 aa).

In terms of domain architecture, GATase cobBQ-type spans 244 to 429; sequence RIAVARDRAF…LHLHWGTQAW (186 aa). Cys-325 serves as the catalytic Nucleophile.

This sequence belongs to the CobB/CbiA family. Mg(2+) serves as cofactor.

The catalysed reaction is cob(II)yrinate + 2 L-glutamine + 2 ATP + 2 H2O = cob(II)yrinate a,c diamide + 2 L-glutamate + 2 ADP + 2 phosphate + 2 H(+). It functions in the pathway cofactor biosynthesis; adenosylcobalamin biosynthesis; cob(II)yrinate a,c-diamide from sirohydrochlorin (anaerobic route): step 10/10. Its function is as follows. Catalyzes the ATP-dependent amidation of the two carboxylate groups at positions a and c of cobyrinate, using either L-glutamine or ammonia as the nitrogen source. This Gloeobacter violaceus (strain ATCC 29082 / PCC 7421) protein is Cobyrinate a,c-diamide synthase.